Reading from the N-terminus, the 413-residue chain is Probable cysteine desulfurase (413 aa).

N6-(pyridoxal phosphate)lysine is present on K229. The active-site Cysteine persulfide intermediate is C368.

It belongs to the class-V pyridoxal-phosphate-dependent aminotransferase family. Csd subfamily. It depends on pyridoxal 5'-phosphate as a cofactor.

The catalysed reaction is (sulfur carrier)-H + L-cysteine = (sulfur carrier)-SH + L-alanine. Catalyzes the removal of elemental sulfur and selenium atoms from L-cysteine, L-cystine, L-selenocysteine, and L-selenocystine to produce L-alanine. The polypeptide is Probable cysteine desulfurase (csd) (Staphylococcus aureus (strain COL)).